A 340-amino-acid polypeptide reads, in one-letter code: Solute-binding protein Dde_0634 (340 aa).

An N-terminal signal peptide occupies residues 1 to 29; sequence MKSTFAALLIMVGCLVSGALLTGSEAAAA. Residues Tyr-99, Arg-172, 210-213, and Tyr-235 each bind (indol-3-yl)acetate; that span reads TSLD.

Belongs to the bacterial solute-binding protein 7 family. The complex is comprised of an extracytoplasmic solute-binding protein and a heteromeric permease formed by two transmembrane proteins.

The protein resides in the periplasm. Solute-binding protein that binds indole-3-pyruvate and indole-3-acetate (in vitro). Can also bind D-tryptophan (in vitro), but that is probably not a physiological ligand. Probably part of a tripartite ATP-independent periplasmic (TRAP) transport system that mediates solute transport into the cytoplasm. The polypeptide is Solute-binding protein Dde_0634 (Oleidesulfovibrio alaskensis (strain ATCC BAA-1058 / DSM 17464 / G20) (Desulfovibrio alaskensis)).